The chain runs to 530 residues: Chaperone Ric-8A (530 aa).

Phosphoserine; by CK2 is present on S435. Residue T440 is modified to Phosphothreonine; by CK2. A Phosphothreonine modification is found at T442. 4 positions are modified to phosphoserine: S501, S522, S523, and S527.

This sequence belongs to the synembryn family. Interacts with GDP-bound G alpha proteins GNAI1, GNAO1 and GNAQ, and with GNA13 with lower affinity. Does not interact with G-alpha proteins when they are in complex with subunits beta and gamma. Interacts (via C-terminus) with RGS14; the interaction stimulates the dissociation of the complex between RGS14 and the active GTP-bound form of GNAI1. Interacts with NCS1; interaction is favored in the absence of Ca(2+) and myristoylation of NCS1 is not required. In terms of processing, phosphorylated at Ser-435 and Thr-440 by CK2, stabilizing its interface with G alpha proteins.

The protein localises to the cytoplasm. Its subcellular location is the cell cortex. Its function is as follows. Chaperone that specifically binds and folds nascent G alpha proteins prior to G protein heterotrimer formation, promoting their stability and activity: folds GNAI1, GNAO1, GNA13 and GNAQ. Does not fold G(s) G-alpha proteins GNAS nor GNAL. Also acts as a guanine nucleotide exchange factor (GEF) for G alpha proteins by stimulating exchange of bound GDP for free GTP. Involved in regulation of microtubule pulling forces during mitotic movement of chromosomes by stimulating G(i)-alpha protein (GNAI1), possibly leading to release G(i)-alpha-GTP and NuMA proteins from the NuMA-GPSM2-G(i)-alpha-GDP complex. Also acts as an activator for G(q)-alpha (GNAQ) protein by enhancing the G(q)-coupled receptor-mediated ERK activation. In Rattus norvegicus (Rat), this protein is Chaperone Ric-8A.